Consider the following 252-residue polypeptide: Imidazole glycerol phosphate synthase subunit HisF (252 aa).

Catalysis depends on residues Asp-11 and Asp-130.

This sequence belongs to the HisA/HisF family. In terms of assembly, heterodimer of HisH and HisF.

It localises to the cytoplasm. It carries out the reaction 5-[(5-phospho-1-deoxy-D-ribulos-1-ylimino)methylamino]-1-(5-phospho-beta-D-ribosyl)imidazole-4-carboxamide + L-glutamine = D-erythro-1-(imidazol-4-yl)glycerol 3-phosphate + 5-amino-1-(5-phospho-beta-D-ribosyl)imidazole-4-carboxamide + L-glutamate + H(+). Its pathway is amino-acid biosynthesis; L-histidine biosynthesis; L-histidine from 5-phospho-alpha-D-ribose 1-diphosphate: step 5/9. Functionally, IGPS catalyzes the conversion of PRFAR and glutamine to IGP, AICAR and glutamate. The HisF subunit catalyzes the cyclization activity that produces IGP and AICAR from PRFAR using the ammonia provided by the HisH subunit. The protein is Imidazole glycerol phosphate synthase subunit HisF of Thermococcus gammatolerans (strain DSM 15229 / JCM 11827 / EJ3).